A 188-amino-acid chain; its full sequence is Nicotinamide-nucleotide adenylyltransferase (188 aa).

It belongs to the archaeal NMN adenylyltransferase family.

Its subcellular location is the cytoplasm. It carries out the reaction beta-nicotinamide D-ribonucleotide + ATP + H(+) = diphosphate + NAD(+). It participates in cofactor biosynthesis; NAD(+) biosynthesis; NAD(+) from nicotinamide D-ribonucleotide: step 1/1. The chain is Nicotinamide-nucleotide adenylyltransferase from Thermococcus kodakarensis (strain ATCC BAA-918 / JCM 12380 / KOD1) (Pyrococcus kodakaraensis (strain KOD1)).